We begin with the raw amino-acid sequence, 672 residues long: Threonine--tRNA ligase (672 aa).

In terms of domain architecture, TGS spans 1–64; sequence MTELLKISLP…EGDAELALIT (64 aa). The tract at residues 257–566 is catalytic; it reads DHRKLGREMD…LIEHFAGRLP (310 aa). The Zn(2+) site is built by Cys-362, His-413, and His-543.

This sequence belongs to the class-II aminoacyl-tRNA synthetase family. As to quaternary structure, homodimer. The cofactor is Zn(2+).

Its subcellular location is the cytoplasm. It catalyses the reaction tRNA(Thr) + L-threonine + ATP = L-threonyl-tRNA(Thr) + AMP + diphosphate + H(+). Its function is as follows. Catalyzes the attachment of threonine to tRNA(Thr) in a two-step reaction: L-threonine is first activated by ATP to form Thr-AMP and then transferred to the acceptor end of tRNA(Thr). Also edits incorrectly charged L-seryl-tRNA(Thr). In Erythrobacter litoralis (strain HTCC2594), this protein is Threonine--tRNA ligase.